The primary structure comprises 125 residues: Lymphocyte antigen 6 complex locus protein G6c (125 aa).

An N-terminal signal peptide occupies residues 1–18 (MKALMLLTLSVLLCWVSA). The region spanning 20–111 (IRCHSCYKVP…PRPTPALGLV (92 aa)) is the UPAR/Ly6 domain. 3 disulfides stabilise this stretch: cysteine 22–cysteine 47, cysteine 25–cysteine 33, and cysteine 39–cysteine 65. N-linked (GlcNAc...) asparagine glycosylation occurs at asparagine 88. Cysteines 92 and 97 form a disulfide. Residue serine 99 is the site of GPI-anchor amidated serine attachment. Residues 100 to 125 (AGPRPTPALGLVFLTSLAGLGLWLLH) constitute a propeptide, removed in mature form.

In terms of assembly, monomer. In terms of processing, N-glycosylated. Highly expressed at the leading edges of cells, on filopodia.

Its subcellular location is the cell membrane. The polypeptide is Lymphocyte antigen 6 complex locus protein G6c (LY6G6C) (Homo sapiens (Human)).